A 633-amino-acid chain; its full sequence is tRNA uridine 5-carboxymethylaminomethyl modification enzyme MnmG (633 aa).

FAD contacts are provided by residues 15-20 (GAGHAG), Val127, and Ser182. NAD(+) is bound at residue 276–290 (GPRYCPSIEDKIVRF). Gln373 contacts FAD.

It belongs to the MnmG family. In terms of assembly, homodimer. Heterotetramer of two MnmE and two MnmG subunits. It depends on FAD as a cofactor.

Its subcellular location is the cytoplasm. Functionally, NAD-binding protein involved in the addition of a carboxymethylaminomethyl (cmnm) group at the wobble position (U34) of certain tRNAs, forming tRNA-cmnm(5)s(2)U34. The protein is tRNA uridine 5-carboxymethylaminomethyl modification enzyme MnmG of Streptococcus thermophilus (strain ATCC BAA-491 / LMD-9).